A 309-amino-acid chain; its full sequence is Protein lifeguard 3 (309 aa).

Disordered stretches follow at residues 1–31 (MSNPSAPPPYEDHNPLYPGSPPPGGYGQPSV) and 64–84 (PMNYGHDYNEEERAGSDSFRP). Residues 70–84 (DYNEEERAGSDSFRP) are compositionally biased toward basic and acidic residues. A phosphoserine mark is found at serine 79 and serine 81. 7 consecutive transmembrane segments (helical) span residues 101–121 (YCIISVQLLITVAIIAIFTFV), 132–152 (VAVYYVSYAVFLVTYLTLACC), 163–183 (IILLTIFTLALGFVTGTISSM), 188–208 (AVIIAMIITAVVSISVTIFCF), 221–241 (FCVLGIVLMVTGIVTSIVLIF), 244–264 (IYWLHMVYAALGAICFTLFLA), and 286–306 (GALQIYTDIVYIFTFVLQLVG).

It belongs to the BI1 family. LFG subfamily. Expressed in most tissues except spleen, thymus and testis.

The protein localises to the membrane. It localises to the lysosome membrane. Its subcellular location is the endosome membrane. In terms of biological role, negatively regulates aortic matrix metalloproteinase-9 (MMP9) production and may play a protective role in vascular remodeling. This chain is Protein lifeguard 3 (Tmbim1), found in Mus musculus (Mouse).